A 479-amino-acid chain; its full sequence is Glutamate--tRNA ligase (479 aa).

The 'HIGH' region motif lies at 9–19; sequence PSPTGLFHIGT. The 'KMSKS' region motif lies at 248 to 252; sequence KLSKR. Lysine 251 contacts ATP.

The protein belongs to the class-I aminoacyl-tRNA synthetase family. Glutamate--tRNA ligase type 1 subfamily. Monomer.

It localises to the cytoplasm. It catalyses the reaction tRNA(Glu) + L-glutamate + ATP = L-glutamyl-tRNA(Glu) + AMP + diphosphate. Catalyzes the attachment of glutamate to tRNA(Glu) in a two-step reaction: glutamate is first activated by ATP to form Glu-AMP and then transferred to the acceptor end of tRNA(Glu). The chain is Glutamate--tRNA ligase from Prochlorococcus marinus (strain MIT 9215).